The following is a 104-amino-acid chain: Growth-regulated protein homolog alpha (104 aa).

Positions 1 to 30 (MAPAATAAAPRLLRAAMLFLLLVAAGRRAA) are cleaved as a signal peptide. Cystine bridges form between C40–C66 and C42–C82.

This sequence belongs to the intercrine alpha (chemokine CxC) family.

It localises to the secreted. The sequence is that of Growth-regulated protein homolog alpha from Bos taurus (Bovine).